The sequence spans 610 residues: Elongation factor 4 (610 aa).

One can recognise a tr-type G domain in the interval 7 to 189 (SRIRNFSIIA…AIVQRIPPPK (183 aa)). Residues 19–24 (DHGKST) and 136–139 (NKID) contribute to the GTP site.

Belongs to the TRAFAC class translation factor GTPase superfamily. Classic translation factor GTPase family. LepA subfamily.

The protein localises to the cell inner membrane. The catalysed reaction is GTP + H2O = GDP + phosphate + H(+). Required for accurate and efficient protein synthesis under certain stress conditions. May act as a fidelity factor of the translation reaction, by catalyzing a one-codon backward translocation of tRNAs on improperly translocated ribosomes. Back-translocation proceeds from a post-translocation (POST) complex to a pre-translocation (PRE) complex, thus giving elongation factor G a second chance to translocate the tRNAs correctly. Binds to ribosomes in a GTP-dependent manner. This is Elongation factor 4 from Thermus thermophilus (strain ATCC BAA-163 / DSM 7039 / HB27).